A 98-amino-acid polypeptide reads, in one-letter code: Citrate lyase acyl carrier protein (98 aa).

Ser-14 carries the post-translational modification O-(phosphoribosyl dephospho-coenzyme A)serine.

Belongs to the CitD family. In terms of assembly, oligomer with a subunit composition of (alpha,beta,gamma)6.

The protein localises to the cytoplasm. Functionally, covalent carrier of the coenzyme of citrate lyase. The polypeptide is Citrate lyase acyl carrier protein (Albidiferax ferrireducens (strain ATCC BAA-621 / DSM 15236 / T118) (Rhodoferax ferrireducens)).